Reading from the N-terminus, the 459-residue chain is Cysteine--tRNA ligase (459 aa).

Cys28 provides a ligand contact to Zn(2+). The 'HIGH' region signature appears at Ile30–His40. Zn(2+)-binding residues include Cys209, His234, and Glu238. The 'KMSKS' region motif lies at Lys266 to Ser270. Lys269 contacts ATP.

It belongs to the class-I aminoacyl-tRNA synthetase family. In terms of assembly, monomer. It depends on Zn(2+) as a cofactor.

The protein localises to the cytoplasm. The catalysed reaction is tRNA(Cys) + L-cysteine + ATP = L-cysteinyl-tRNA(Cys) + AMP + diphosphate. This is Cysteine--tRNA ligase from Shewanella woodyi (strain ATCC 51908 / MS32).